A 354-amino-acid polypeptide reads, in one-letter code: Rhodopsin (354 aa).

Residues 1-36 (MNGTEGPYFYIPMVNTTGIVRSPYDYPQYYLVNPAA) are Extracellular-facing. N2 and N15 each carry an N-linked (GlcNAc...) asparagine glycan. A helical transmembrane segment spans residues 37-61 (YAALGAYMFFLILVGFPINFLTLYV). The Cytoplasmic portion of the chain corresponds to 62-73 (TIEHKKLRTPLN). The helical transmembrane segment at 74–96 (YILLNLAVANLFMVFGGFTTTMY) threads the bilayer. The Extracellular segment spans residues 97 to 110 (TSMHGYFVLGRLGC). C110 and C187 are disulfide-bonded. A helical transmembrane segment spans residues 111–133 (NLEGFFATLGGEIALWSLVVLAV). Residues 134–136 (ERW) carry the 'Ionic lock' involved in activated form stabilization motif. Residues 134–152 (ERWMVVCKPISNFRFGENH) lie on the Cytoplasmic side of the membrane. Residues 153–173 (AIMGLAMTWLMASACAVPPLV) form a helical membrane-spanning segment. Topologically, residues 174–202 (GWSRYIPEGMQCSCGVDYYTRAEGFNNES) are extracellular. N-linked (GlcNAc...) asparagine glycosylation is present at N200. Residues 203-224 (FVVYMFCCHFMIPLIIVFFCYG) traverse the membrane as a helical segment. Topologically, residues 225–252 (RLLCAVKEAAAAQQESETTQRAEREVTR) are cytoplasmic. The helical transmembrane segment at 253–274 (MVVIMVIAFLVCWLPYASVAWW) threads the bilayer. Residues 275–286 (IFTHQGSEFGPV) are Extracellular-facing. Residues 287-308 (FMTIPAFFAKSSSIYNPMIYIC) traverse the membrane as a helical segment. Position 296 is an N6-(retinylidene)lysine (K296). The Cytoplasmic portion of the chain corresponds to 309–354 (MNKQFRNCMITTLCCGKNPFEEEEGASSTASKTEASSVSSSSVSPA). 2 S-palmitoyl cysteine lipidation sites follow: C322 and C323. A disordered region spans residues 329 to 354 (EEEEGASSTASKTEASSVSSSSVSPA). Residues 334 to 354 (ASSTASKTEASSVSSSSVSPA) show a composition bias toward low complexity.

Belongs to the G-protein coupled receptor 1 family. Opsin subfamily. Post-translationally, phosphorylated on some or all of the serine and threonine residues present in the C-terminal region. Contains one covalently linked retinal chromophore.

The protein resides in the membrane. It localises to the cell projection. Its subcellular location is the cilium. The protein localises to the photoreceptor outer segment. Functionally, photoreceptor required for image-forming vision at low light intensity. While most salt water fish species use retinal as chromophore, most freshwater fish use 3-dehydroretinal, or a mixture of retinal and 3-dehydroretinal. Light-induced isomerization of 11-cis to all-trans retinal triggers a conformational change that activates signaling via G-proteins. Subsequent receptor phosphorylation mediates displacement of the bound G-protein alpha subunit by arrestin and terminates signaling. The protein is Rhodopsin (rho) of Mullus surmuletus (Striped red mullet).